Consider the following 375-residue polypeptide: Succinyl-diaminopimelate desuccinylase (375 aa).

Histidine 66 is a Zn(2+) binding site. Aspartate 68 is a catalytic residue. Aspartate 99 lines the Zn(2+) pocket. Residue glutamate 133 is the Proton acceptor of the active site. Positions 134, 162, and 348 each coordinate Zn(2+).

The protein belongs to the peptidase M20A family. DapE subfamily. In terms of assembly, homodimer. Requires Zn(2+) as cofactor. Co(2+) serves as cofactor.

The enzyme catalyses N-succinyl-(2S,6S)-2,6-diaminopimelate + H2O = (2S,6S)-2,6-diaminopimelate + succinate. Its pathway is amino-acid biosynthesis; L-lysine biosynthesis via DAP pathway; LL-2,6-diaminopimelate from (S)-tetrahydrodipicolinate (succinylase route): step 3/3. Functionally, catalyzes the hydrolysis of N-succinyl-L,L-diaminopimelic acid (SDAP), forming succinate and LL-2,6-diaminopimelate (DAP), an intermediate involved in the bacterial biosynthesis of lysine and meso-diaminopimelic acid, an essential component of bacterial cell walls. In Stenotrophomonas maltophilia (strain K279a), this protein is Succinyl-diaminopimelate desuccinylase.